The chain runs to 226 residues: Histone H1.5 (226 aa).

Residues 1 to 16 are compositionally biased toward low complexity; it reads MSETAPAETATPAPVE. Residues 1–44 form a disordered region; sequence MSETAPAETATPAPVEKSPAKKKATKKAAGAGAAKRKATGPPVS. At S2 the chain carries N-acetylserine; partial. S2 bears the Phosphoserine mark. T11 carries the post-translational modification Phosphothreonine; by GSK3. K17 is modified (N6-acetyllysine). S18 carries the phosphoserine modification. K27 bears the N6-methyllysine mark. K37 is modified (N6-(beta-hydroxybutyryl)lysine; alternate). K37 carries the N6-succinyllysine; alternate modification. T39 carries the phosphothreonine modification. The H15 domain maps to 39–112; that stretch reads TGPPVSELIT…GASGSFKLNK (74 aa). Residue K49 is modified to N6-acetyllysine. An N6-(beta-hydroxybutyryl)lysine modification is found at K55. A Citrulline modification is found at R57. Position 67 is an N6-(beta-hydroxybutyryl)lysine (K67). K78 bears the N6-acetyllysine mark. Residues K88, K93, and K109 each carry the N6-(beta-hydroxybutyryl)lysine modification. Positions 98–226 are disordered; it reads QTKGTGASGS…KAKKAAAKKK (129 aa). Over residues 122-133 the composition is skewed to basic residues; the sequence is KAKKAGAAKAKK. T138 and T155 each carry phosphothreonine. Over residues 140 to 161 the composition is skewed to basic residues; the sequence is KKAKKAAGAKKAVKKTPKKAKK. The residue at position 168 (K168) is an N6-acetyllysine. Over residues 169-187 the composition is skewed to basic residues; it reads KVAKSPKKAKAAAKPKKAT. A phosphoserine mark is found at S173 and S189. The segment covering 194–226 has biased composition (basic residues); the sequence is KAVKPKAAKPKAAKPKAAKPKAAKAKKAAAKKK.

Belongs to the histone H1/H5 family. As to quaternary structure, interacts with MSX1. H1 histones are progressively phosphorylated during the cell cycle, becoming maximally phosphorylated during late G2 phase and M phase, and being dephosphorylated sharply thereafter. Phosphorylated at Thr-11 by GSK3B during mitosis in prometaphase and dephosphorylated in telophase. Post-translationally, citrullination at Arg-57 (H1R54ci) by PADI4 takes place within the DNA-binding site of H1 and results in its displacement from chromatin and global chromatin decondensation, thereby promoting pluripotency and stem cell maintenance. In terms of tissue distribution, ubiquitous. Expressed in the majority of the cell lines tested and in testis.

It is found in the nucleus. It localises to the chromosome. Histone H1 protein binds to linker DNA between nucleosomes forming the macromolecular structure known as the chromatin fiber. Histones H1 are necessary for the condensation of nucleosome chains into higher-order structured fibers. Also acts as a regulator of individual gene transcription through chromatin remodeling, nucleosome spacing and DNA methylation. This is Histone H1.5 from Homo sapiens (Human).